The following is a 141-amino-acid chain: Nucleoside diphosphate kinase (141 aa).

ATP contacts are provided by lysine 9, phenylalanine 57, arginine 85, threonine 91, arginine 102, and asparagine 112. Histidine 115 (pros-phosphohistidine intermediate) is an active-site residue.

This sequence belongs to the NDK family. Homotetramer. Mg(2+) is required as a cofactor.

Its subcellular location is the cytoplasm. It catalyses the reaction a 2'-deoxyribonucleoside 5'-diphosphate + ATP = a 2'-deoxyribonucleoside 5'-triphosphate + ADP. The catalysed reaction is a ribonucleoside 5'-diphosphate + ATP = a ribonucleoside 5'-triphosphate + ADP. In terms of biological role, major role in the synthesis of nucleoside triphosphates other than ATP. The ATP gamma phosphate is transferred to the NDP beta phosphate via a ping-pong mechanism, using a phosphorylated active-site intermediate. This is Nucleoside diphosphate kinase from Chlamydia trachomatis serovar L2 (strain ATCC VR-902B / DSM 19102 / 434/Bu).